A 359-amino-acid chain; its full sequence is MNILMLSPEHPDEPKSGLGVHLNRLISYLNPHINITVFTPSGQLFSYAKFEDYIADANFTMVRHVLSHNKRFDLIHAHDDTTAPAAQYLKQRLGLPLAATIHGLESERKKVCREAPHPYRLMTERLLIESADALIVLSTFMKRSLDKAAHKKITVIPSPASMEEEKGKIPRSMNRRFLFSYGRFVPEKGLSQLLKVFAILKQRQPDLYLVLAGEGPSLSCYEKLAAAYNLKDRVMFLPFLNRKDIRTLLSHCEMAVFPSSYEPFGLAAQESMEQGVLTVVSQSGGFCDYAVHDKTAIIADFTLVQEAADLLDSFLKDREKARRIKEAGRQQVFKLHHPRLIMSSYLQLYERIFNNSAIH.

This sequence belongs to the glycosyltransferase group 1 family. Glycosyltransferase 4 subfamily.

This is an uncharacterized protein from Bacillus subtilis (strain 168).